Consider the following 208-residue polypeptide: Large ribosomal subunit protein uL3 (208 aa).

The disordered stretch occupies residues 117-149; the sequence is FQGVIKRHGQSRGPMAHGSRYHRRPGSMGPVSP.

It belongs to the universal ribosomal protein uL3 family. Part of the 50S ribosomal subunit. Forms a cluster with proteins L14 and L19.

One of the primary rRNA binding proteins, it binds directly near the 3'-end of the 23S rRNA, where it nucleates assembly of the 50S subunit. The polypeptide is Large ribosomal subunit protein uL3 (Streptococcus equi subsp. equi (strain 4047)).